Here is an 87-residue protein sequence, read N- to C-terminus: Toxin CngtIII (87 aa).

The N-terminal stretch at 1-19 (MNSLLMITACLVLFGTVWA) is a signal peptide. An LCN-type CS-alpha/beta domain is found at 20-85 (KEGYLVNKST…TYPLPNKTCS (66 aa)). 4 cysteine pairs are disulfide-bonded: Cys31–Cys84, Cys35–Cys60, Cys44–Cys65, and Cys48–Cys67.

It belongs to the long (4 C-C) scorpion toxin superfamily. Sodium channel inhibitor family. Beta subfamily. Expressed by the venom gland.

The protein localises to the secreted. In terms of biological role, beta toxins bind voltage-independently at site-4 of sodium channels (Nav) and shift the voltage of activation toward more negative potentials thereby affecting sodium channel activation and promoting spontaneous and repetitive firing. This is Toxin CngtIII from Centruroides noxius (Mexican scorpion).